The primary structure comprises 274 residues: Thiamine kinase (274 aa).

It belongs to the thiamine kinase family.

The enzyme catalyses thiamine + ATP = thiamine phosphate + ADP + H(+). It functions in the pathway cofactor biosynthesis; thiamine diphosphate biosynthesis; thiamine phosphate from thiamine: step 1/1. Catalyzes the ATP-dependent phosphorylation of thiamine to thiamine phosphate. Is involved in thiamine salvage. The sequence is that of Thiamine kinase from Escherichia coli O45:K1 (strain S88 / ExPEC).